A 248-amino-acid polypeptide reads, in one-letter code: MEAPEGGGGGPAARGPEGQPAPEARVHFRVARFIMEAGVKLGMRSIPIATACTIYHKFFCETNLDAYDPYLIAMSSIYLAGKVEEQHLRTRDIINVSNRYFNPSGEPLELDSRFWELRDSIVQCELLMLRVLRFQVSFQHPHKYLLHYLVSLQNWLNRHSWQRTPVAVTAWALLRDSYHGALCLRFQAQHIAVAVLYLALQVYGVEVPAEVEAEKPWWQVFNDDLTKPIIDNIVSDLIQIYTMDTEIP.

N-acetylmethionine is present on M1. A compositionally biased stretch (gly residues) spans 1–12 (MEAPEGGGGGPA). The interval 1 to 21 (MEAPEGGGGGPAARGPEGQPA) is disordered.

Belongs to the cyclin family. Cyclin-like FAM58 subfamily. Associates with CDK10 to promote its kinase activity. Interacts with SALL1.

In terms of biological role, activating cyclin for the cyclin-associated kinase CDK10. This Homo sapiens (Human) protein is Cyclin-Q.